We begin with the raw amino-acid sequence, 978 residues long: Retinoblastoma-related protein 2 (978 aa).

The segment at 385–585 (TPVTSAMTTA…EKGSSLYNSL (201 aa)) is domain A. The pocket stretch occupies residues 385-832 (TPVTSAMTTA…NQVFVPTVKP (448 aa)). Residues 586 to 704 (VVARPSLSTE…PVSGNEKCAV (119 aa)) form a spacer region. The tract at residues 616–645 (QSIHPDGLPPTPSKRWPSAGPDGNCYPQSP) is disordered. The tract at residues 705–832 (VGVQIFFSKI…NQVFVPTVKP (128 aa)) is domain B. Disordered regions lie at residues 841 to 878 (STRPEDKRNTNSQIPGSPKSSPFSNLPDMSPKKVSSSH) and 947 to 978 (VAGSLGQPNGGSASSDPAAAFSPLSKKSKTDS). A compositionally biased stretch (polar residues) spans 850–864 (TNSQIPGSPKSSPFS). The span at 958–971 (SASSDPAAAFSPLS) shows a compositional bias: low complexity.

It belongs to the retinoblastoma protein (RB) family.

It is found in the nucleus. Regulator of biological processes that recruits a histone deacetylase to control gene transcription. May play a role in the entry into mitosis, negatively regulating the cell proliferation. Formation of stable complexes with geminiviridae replication-associated proteins may create a cellular environment which favors viral DNA replication. The polypeptide is Retinoblastoma-related protein 2 (RBR2) (Oryza sativa subsp. japonica (Rice)).